A 123-amino-acid polypeptide reads, in one-letter code: Small ribosomal subunit protein uS12c (123 aa).

Residues 1 to 20 (MPTIQQLIRNTRQPTQNRTK) are compositionally biased toward polar residues. Positions 1-27 (MPTIQQLIRNTRQPTQNRTKSPALKAC) are disordered.

This sequence belongs to the universal ribosomal protein uS12 family. As to quaternary structure, part of the 30S ribosomal subunit.

It is found in the plastid. It localises to the chloroplast. With S4 and S5 plays an important role in translational accuracy. Located at the interface of the 30S and 50S subunits. The chain is Small ribosomal subunit protein uS12c (rps12) from Zygnema circumcarinatum (Green alga).